The sequence spans 623 residues: MPHSDELDAGNVLAVENLNIAFMQDQQKIAAVRNLSFSLQRGETLAIVGESGSGKSVTALALMRLLEQAGGLVQCDKMLLRRRSRDVIELSEQSAAQMRHVRGADMAMIFQEPMTSLNPVFTVGEQIAESIRLHQNASREEAMVEAKRMLDQVRIPEAQTILSRYPHQLSGGMRQRVMIAMALSCRPAVLIADEPTTALDVTIQAQILQLIKVLQKEMSMGVIFITHDMGVVAEIADRVLVMYQGEAVETGTVEQIFHAPQHPYTRALLAAVPQLGAMKGLDYPRRFPLISLEHPAKQAPPIEQKTVVDGEPVLRVRNLVTRFPLRSGLLNRVTREVHAVEKVSFDLWPGETLSLVGESGSGKSTTGRALLRLVESQGGEIIFNGQRIDTLSPGKLQALRRDIQFIFQDPYASLDPRQTIGDSIIEPLRVHGLLPGKEAVARVAWLLERVGLLPEHAWRYPHEFSGGQRQRICIARALALNPKVIIADEAVSALDVSIRGQIINLLLDLQRDFGIAYLFISHDMAVVERISHRVAVMYLGQIVEIGPRRAVFENPQHPYTRKLLAAVPVAEPSRQRPQRVLLSDDLPSNIHLRGEEVAAVSLQCVGPGHYVAQPQSEYAFMRR.

2 ABC transporter domains span residues 15 to 269 (VENL…RALL) and 314 to 564 (LRVR…RKLL). Residues 49–56 (GESGSGKS) and 357–364 (GESGSGKS) each bind ATP.

It belongs to the ABC transporter superfamily. Glutathione importer (TC 3.A.1.5.11) family. In terms of assembly, the complex is composed of two ATP-binding proteins (GsiA), two transmembrane proteins (GsiC and GsiD) and a solute-binding protein (GsiB).

It localises to the cell inner membrane. The catalysed reaction is glutathione(out) + ATP + H2O = glutathione(in) + ADP + phosphate + H(+). Functionally, part of the ABC transporter complex GsiABCD involved in glutathione import. Responsible for energy coupling to the transport system. This is Glutathione import ATP-binding protein GsiA from Escherichia coli O157:H7.